The primary structure comprises 160 residues: Ribosome maturation factor RimP (160 aa).

This sequence belongs to the RimP family.

The protein localises to the cytoplasm. Functionally, required for maturation of 30S ribosomal subunits. This Orientia tsutsugamushi (strain Boryong) (Rickettsia tsutsugamushi) protein is Ribosome maturation factor RimP.